The chain runs to 181 residues: Shikimate kinase 2 (181 aa).

Position 12-17 (12-17 (GCGKTT)) interacts with ATP. Thr-16 and Asp-32 together coordinate Mg(2+). Residues Asp-34, Arg-58, and Gly-79 each coordinate substrate. The LID domain stretch occupies residues 112–126 (EAEPEVGLRPTLTGK). Residue Arg-120 participates in ATP binding. Arg-139 contacts substrate.

The protein belongs to the shikimate kinase family. AroL subfamily. In terms of assembly, monomer. It depends on Mg(2+) as a cofactor.

Its subcellular location is the cytoplasm. The catalysed reaction is shikimate + ATP = 3-phosphoshikimate + ADP + H(+). It participates in metabolic intermediate biosynthesis; chorismate biosynthesis; chorismate from D-erythrose 4-phosphate and phosphoenolpyruvate: step 5/7. Its function is as follows. Catalyzes the specific phosphorylation of the 3-hydroxyl group of shikimic acid using ATP as a cosubstrate. The chain is Shikimate kinase 2 from Escherichia fergusonii (strain ATCC 35469 / DSM 13698 / CCUG 18766 / IAM 14443 / JCM 21226 / LMG 7866 / NBRC 102419 / NCTC 12128 / CDC 0568-73).